We begin with the raw amino-acid sequence, 417 residues long: Serine hydroxymethyltransferase (417 aa).

(6S)-5,6,7,8-tetrahydrofolate is bound by residues Leu121 and 125–127 (GHL). The residue at position 229 (Lys229) is an N6-(pyridoxal phosphate)lysine. 355 to 357 (SPF) provides a ligand contact to (6S)-5,6,7,8-tetrahydrofolate.

The protein belongs to the SHMT family. Homodimer. Pyridoxal 5'-phosphate serves as cofactor.

It localises to the cytoplasm. It catalyses the reaction (6R)-5,10-methylene-5,6,7,8-tetrahydrofolate + glycine + H2O = (6S)-5,6,7,8-tetrahydrofolate + L-serine. Its pathway is one-carbon metabolism; tetrahydrofolate interconversion. The protein operates within amino-acid biosynthesis; glycine biosynthesis; glycine from L-serine: step 1/1. In terms of biological role, catalyzes the reversible interconversion of serine and glycine with tetrahydrofolate (THF) serving as the one-carbon carrier. This reaction serves as the major source of one-carbon groups required for the biosynthesis of purines, thymidylate, methionine, and other important biomolecules. Also exhibits THF-independent aldolase activity toward beta-hydroxyamino acids, producing glycine and aldehydes, via a retro-aldol mechanism. This Erwinia tasmaniensis (strain DSM 17950 / CFBP 7177 / CIP 109463 / NCPPB 4357 / Et1/99) protein is Serine hydroxymethyltransferase.